The chain runs to 734 residues: Photosystem I P700 chlorophyll a apoprotein A2 (734 aa).

A run of 8 helical transmembrane segments spans residues 46–69, 135–158, 175–199, 273–291, 330–353, 369–395, 417–439, and 517–535; these read IFAS…FHVA, LYTG…LHLQ, LNHH…HVAI, MAHH…GHMY, LHFQ…QHMY, AALY…IFFI, AIIS…LYVH, and FLVH…LILV. Positions 559 and 568 each coordinate [4Fe-4S] cluster. 2 consecutive transmembrane segments (helical) span residues 575–596 and 643–665; these read AFYL…YWHW and LSVW…MFLI. 3 residues coordinate chlorophyll a: His-654, Met-662, and Tyr-670. Trp-671 is a binding site for phylloquinone. The helical transmembrane segment at 707–727 threads the bilayer; the sequence is LVGLAHFSVGYIFTYAAFLIA.

This sequence belongs to the PsaA/PsaB family. As to quaternary structure, the PsaA/B heterodimer binds the P700 chlorophyll special pair and subsequent electron acceptors. PSI consists of a core antenna complex that captures photons, and an electron transfer chain that converts photonic excitation into a charge separation. The eukaryotic PSI reaction center is composed of at least 11 subunits. The cofactor is P700 is a chlorophyll a/chlorophyll a' dimer, A0 is one or more chlorophyll a, A1 is one or both phylloquinones and FX is a shared 4Fe-4S iron-sulfur center..

The protein resides in the plastid. The protein localises to the chloroplast thylakoid membrane. It carries out the reaction reduced [plastocyanin] + hnu + oxidized [2Fe-2S]-[ferredoxin] = oxidized [plastocyanin] + reduced [2Fe-2S]-[ferredoxin]. Its function is as follows. PsaA and PsaB bind P700, the primary electron donor of photosystem I (PSI), as well as the electron acceptors A0, A1 and FX. PSI is a plastocyanin-ferredoxin oxidoreductase, converting photonic excitation into a charge separation, which transfers an electron from the donor P700 chlorophyll pair to the spectroscopically characterized acceptors A0, A1, FX, FA and FB in turn. Oxidized P700 is reduced on the lumenal side of the thylakoid membrane by plastocyanin. The sequence is that of Photosystem I P700 chlorophyll a apoprotein A2 from Solanum tuberosum (Potato).